Reading from the N-terminus, the 885-residue chain is MQERYQPNSVEAAAQQTWQARDAYLVHEHAKNPDGSEKPKFYACSMLPYPSGKLHMGHVRNYTINDMMARQLRMRGYNVLMPMGWDAFGMPAENAAIKSKVPPAKWTYDNIAYMKKQMKAMGLAIDWSREMCACDPKYYKWNQWLFLKMLEKGIAYRKTQVVNWDPVDQTVLANEQVIDGRGWRSGAPVEKREIPGYYLRITDYAEELLDQVSTNLPGWPERVRLMQENWIGKSEGLRFAFPHRIAGADGKLIQDGKLYVFTTRADTIMGVTFCAVAPEHPLATHAAQSNPALAAFVEQCKLGGTTEAEMATREKEGMPTGLTVTHPLTGAEIDVWVGNYVLMTYGDGAVMGVPAHDERDFAFARKYGLPIRQVVALEGKTYSTDAWQEWYGDKQAGRTVNSGKYDGLAYQAAVDAIAADLAAQGVGEKQTTWRLRDWGISRQRYWGTPIPIIHCADCGPVPVPEQDLPVVLPDDLIPDGSGNPLAKNEAFLSCSCPRCGKPARRETDTMDTFVDSSWYFMRYTSPDNDQAMVDARNDYWMPMDQYIGGIEHAVLHLLYARFWTKVMRDLGLLNFDEPFTKLLCQGMVLNHIYSRKTPQGGIEYFWPEEVDNVYDAKGAIVGAKLQRDGSEVNYGGVGTMSKSKNNGVDPQSLIDTLGADTARLFVMFASPPEQTLEWSDSGVEGANRFLRRLWALGYAQREAVGRGLATGADWAQAPAPVKELRREVYGLLKQADYDYQRIQYNTVVSACMKMLNAIDDAPLPEGPAADAARAETLGLLLRVLYPVVPHITWHLWQDLGYAEHLGDLLDAPWPHVDEAALVADEIELMLQVNGKLRGSIRVAAKAPKEDIERIAAAQEEVARFLEGRPPKRVIVVPGKLVNVVG.

The 'HIGH' region signature appears at 48-58; that stretch reads PYPSGKLHMGH. The 'KMSKS' region signature appears at 639-643; the sequence is TMSKS. Lys642 is an ATP binding site.

This sequence belongs to the class-I aminoacyl-tRNA synthetase family.

It is found in the cytoplasm. It catalyses the reaction tRNA(Leu) + L-leucine + ATP = L-leucyl-tRNA(Leu) + AMP + diphosphate. The protein is Leucine--tRNA ligase of Bordetella pertussis (strain Tohama I / ATCC BAA-589 / NCTC 13251).